The chain runs to 210 residues: Thymidylate kinase (210 aa).

10 to 17 (GPEGAGKS) lines the ATP pocket.

This sequence belongs to the thymidylate kinase family.

It catalyses the reaction dTMP + ATP = dTDP + ADP. Phosphorylation of dTMP to form dTDP in both de novo and salvage pathways of dTTP synthesis. The chain is Thymidylate kinase from Pseudomonas fluorescens (strain ATCC BAA-477 / NRRL B-23932 / Pf-5).